The sequence spans 172 residues: Large ribosomal subunit protein bL17 (172 aa).

Residues 140–160 show a composition bias toward basic and acidic residues; it reads LKAEAKAKREEKKPAKKEEKP. Positions 140-172 are disordered; sequence LKAEAKAKREEKKPAKKEEKPKKAKKEKAAASN.

This sequence belongs to the bacterial ribosomal protein bL17 family. Part of the 50S ribosomal subunit. Contacts protein L32.

The protein is Large ribosomal subunit protein bL17 of Leptospira biflexa serovar Patoc (strain Patoc 1 / Ames).